We begin with the raw amino-acid sequence, 627 residues long: DNA topoisomerase 4 subunit B (627 aa).

ATP contacts are provided by residues Tyr-4, Asn-41, Asp-68, 109 to 115, and Lys-333; that span reads GLHGVGV. Positions 412–525 constitute a Toprim domain; the sequence is TELFIVEGDS…NGHIYIAQPP (114 aa). Mg(2+) is bound by residues Glu-418, Asp-490, and Asp-492.

It belongs to the type II topoisomerase family. ParE type 1 subfamily. In terms of assembly, heterotetramer composed of ParC and ParE. Mg(2+) serves as cofactor. Requires Mn(2+) as cofactor. It depends on Ca(2+) as a cofactor.

It carries out the reaction ATP-dependent breakage, passage and rejoining of double-stranded DNA.. With respect to regulation, pyrrolopyrimidines inhibit both GyrB and its paralog in topoisomerase IV (parE). Topoisomerase IV is essential for chromosome segregation. It relaxes supercoiled DNA. Performs the decatenation events required during the replication of a circular DNA molecule. The chain is DNA topoisomerase 4 subunit B from Francisella tularensis subsp. holarctica (strain LVS).